The chain runs to 263 residues: NH(3)-dependent NAD(+) synthetase (263 aa).

An ATP-binding site is contributed by 29–36 (GISGGIDS). Asp35 is a Mg(2+) binding site. Arg114 lines the deamido-NAD(+) pocket. ATP is bound at residue Thr134. Glu139 provides a ligand contact to Mg(2+). Deamido-NAD(+)-binding residues include Lys147 and Asp154. Lys163 and Ser185 together coordinate ATP. Position 244 to 245 (244 to 245 (HK)) interacts with deamido-NAD(+).

Belongs to the NAD synthetase family. As to quaternary structure, homodimer.

The catalysed reaction is deamido-NAD(+) + NH4(+) + ATP = AMP + diphosphate + NAD(+) + H(+). It participates in cofactor biosynthesis; NAD(+) biosynthesis; NAD(+) from deamido-NAD(+) (ammonia route): step 1/1. Functionally, catalyzes the ATP-dependent amidation of deamido-NAD to form NAD. Uses ammonia as a nitrogen source. The chain is NH(3)-dependent NAD(+) synthetase from Methanococcoides burtonii (strain DSM 6242 / NBRC 107633 / OCM 468 / ACE-M).